We begin with the raw amino-acid sequence, 180 residues long: Cytochrome c oxidase assembly protein CtaG (180 aa).

The Cytoplasmic segment spans residues 1–8 (MSKKSNKS). Residues 9-29 (LAFSLLGLIVSMVLLSFAAVP) traverse the membrane as a helical; Signal-anchor for type II membrane protein segment. Residues 30-180 (LYNLFCKVTG…SFFKVRDVKK (151 aa)) are Periplasmic-facing.

The protein belongs to the COX11/CtaG family.

It is found in the cell inner membrane. Functionally, exerts its effect at some terminal stage of cytochrome c oxidase synthesis, probably by being involved in the insertion of the copper B into subunit I. The polypeptide is Cytochrome c oxidase assembly protein CtaG (Rickettsia bellii (strain RML369-C)).